Consider the following 294-residue polypeptide: MEEYTKAEILIEALPYICKFHDQKVLIKYGGHAMVNEQAKNWIAKDLVLLKYVGINPIVVHGGGPEINRAMEKMGKTPEFIHGLRVTDEETLEIVKMVLIGKINGDIVSKLELYGGKAVGLSGKSGQLIKAKKKIQYLMKDSQKIEVDLGMVGEVEHVDTKLIDILVEKRYIPVISPIGVDHQGNDLNLNADIAAGDIAGAMNAEKLIMVTDVDGIMDDIKDPSTLHRKLTISQIEGMIERGLITGGMIPKIEACINALDKGVQSVHIVNGKTPHAVLLEIFTEDGVGTMVVRE.

Residues 63 to 64 (GG), arginine 85, and asparagine 188 contribute to the substrate site.

Belongs to the acetylglutamate kinase family. ArgB subfamily.

It is found in the cytoplasm. The catalysed reaction is N-acetyl-L-glutamate + ATP = N-acetyl-L-glutamyl 5-phosphate + ADP. It participates in amino-acid biosynthesis; L-arginine biosynthesis; N(2)-acetyl-L-ornithine from L-glutamate: step 2/4. Its function is as follows. Catalyzes the ATP-dependent phosphorylation of N-acetyl-L-glutamate. This chain is Acetylglutamate kinase, found in Methanococcus maripaludis (strain C7 / ATCC BAA-1331).